The sequence spans 742 residues: Two-component response regulator-like PRR37 (742 aa).

Positions 63-181 (KVLLVDSDDS…ELKNLWQHVW (119 aa)) constitute a Response regulatory domain. Residues 186 to 195 (SSSGSGSESG) are compositionally biased toward low complexity. Disordered stretches follow at residues 186 to 249 (SSSG…SWTK), 290 to 346 (PCTS…PLQN), 377 to 402 (QQAARAANAPNCSSKVPEGKDKNRDN), 478 to 517 (MKSNSDAAPIKQGSNGSSNNNDMGSTTKNVVTKPSTNKER), 533 to 568 (FHPAQHWTSPANTTGKEKTDEVANNAAKRAQPGEVQ), 590 to 671 (NGGS…GNDM), and 697 to 742 (NFGK…AADR). Over residues 236-248 (DNGSGTQAQSSWT) the composition is skewed to polar residues. Basic and acidic residues predominate over residues 299–313 (KQKETNDDFKGKDLE). The segment covering 318–330 (RNLNTAYQSSPNE) has biased composition (polar residues). The segment covering 331-341 (RSIKPTDRRNE) has biased composition (basic and acidic residues). Over residues 490–502 (GSNGSSNNNDMGS) the composition is skewed to low complexity. The segment covering 503–512 (TTKNVVTKPS) has biased composition (polar residues). The span at 618 to 634 (NGSNSGSNNGSNGQNGS) shows a compositional bias: low complexity. A compositionally biased stretch (gly residues) spans 656-667 (GPGGGNGSGSGS). The CCT domain maps to 682-724 (RVAAVIKFRQKRKERNFGKKVRYQSRKRLAEQRPRVRGQFVRQ). Residues 697–708 (NFGKKVRYQSRK) are compositionally biased toward basic residues. Low complexity predominate over residues 719–731 (GQFVRQAVQDQQQ).

The protein belongs to the ARR-like family.

Its subcellular location is the nucleus. Probable transcription factor involved in the regulation of flowering time under long day (LD) conditions. Functions as a repressor of flowering. Controls flowering time by negatively regulating the expression of HD3A. Acts downstream of the phytochrome B to repress the expression of EHD1, an activator of the flowering promoter genes HD3A and RFT1. Controls photoperiodic flowering response. Seems to be one of the component of the circadian clock. Expression of several members of the ARR-like family is controlled by circadian rhythm. The particular coordinated sequential expression of PRR73, PRR37, PRR95, PRR59 and PPR1 result to circadian waves that may be at the basis of the endogenous circadian clock. This chain is Two-component response regulator-like PRR37, found in Oryza sativa subsp. japonica (Rice).